The primary structure comprises 434 residues: Trehalose-phosphatase (434 aa).

Residues Asp-156 and Asp-158 each coordinate Mg(2+). Catalysis depends on Asp-158, which acts as the Proton donor/acceptor. 275–277 (QKK) lines the substrate pocket. Asp-366 lines the Mg(2+) pocket.

It belongs to the gob-1 trehalose phosphatase family. Mg(2+) serves as cofactor.

The enzyme catalyses alpha,alpha-trehalose 6-phosphate + H2O = alpha,alpha-trehalose + phosphate. In terms of biological role, catalyzes the hydrolysis of trehalose 6-phosphate to trehalose and phosphate; prevents the accumulation of toxic levels of trehalose 6-phosphate. The chain is Trehalose-phosphatase (gob-1) from Caenorhabditis briggsae.